A 600-amino-acid polypeptide reads, in one-letter code: Elongation factor 4 (600 aa).

A tr-type G domain is found at 4-186; sequence SKIRNFSIIA…AIVDKIPPPS (183 aa). Residues 16–21 and 133–136 each bind GTP; these read DHGKST and NKID.

Belongs to the TRAFAC class translation factor GTPase superfamily. Classic translation factor GTPase family. LepA subfamily.

The protein localises to the cell membrane. The catalysed reaction is GTP + H2O = GDP + phosphate + H(+). Functionally, required for accurate and efficient protein synthesis under certain stress conditions. May act as a fidelity factor of the translation reaction, by catalyzing a one-codon backward translocation of tRNAs on improperly translocated ribosomes. Back-translocation proceeds from a post-translocation (POST) complex to a pre-translocation (PRE) complex, thus giving elongation factor G a second chance to translocate the tRNAs correctly. Binds to ribosomes in a GTP-dependent manner. The protein is Elongation factor 4 of Mycoplasma capricolum subsp. capricolum (strain California kid / ATCC 27343 / NCTC 10154).